The sequence spans 198 residues: Integrator complex subunit 8-like protein (198 aa).

Belongs to the Integrator subunit 8 family. As to quaternary structure, component of the Integrator complex. The core complex associates with protein phosphatase 2A subunits, to form the Integrator-PP2A (INTAC) complex.

The protein localises to the nucleus. It localises to the chromosome. Functionally, component of the integrator complex, a multiprotein complex that terminates RNA polymerase II (Pol II) transcription in the promoter-proximal region of genes. The integrator complex provides a quality checkpoint during transcription elongation by driving premature transcription termination of transcripts that are unfavorably configured for transcriptional elongation: the complex terminates transcription by (1) catalyzing dephosphorylation of the C-terminal domain (CTD) of Pol II subunit polr2a, (2) degrading the exiting nascent RNA transcript via endonuclease activity and (3) promoting the release of Pol II from bound DNA. The integrator complex is also involved in terminating the synthesis of non-coding Pol II transcripts, such as enhancer RNAs (eRNAs), small nuclear RNAs (snRNAs), telomerase RNAs and long non-coding RNAs (lncRNAs). Within the integrator complex, INTS8 is required for the recruitment of protein phosphatase 2A (PP2A) to transcription pause-release checkpoint. In Dictyostelium discoideum (Social amoeba), this protein is Integrator complex subunit 8-like protein.